The chain runs to 98 residues: Integration host factor subunit alpha (98 aa).

The disordered stretch occupies residues 50–71 (GNFDLRDKNQRPGRNPKTGEDI).

Belongs to the bacterial histone-like protein family. In terms of assembly, heterodimer of an alpha and a beta chain.

Functionally, this protein is one of the two subunits of integration host factor, a specific DNA-binding protein that functions in genetic recombination as well as in transcriptional and translational control. The protein is Integration host factor subunit alpha of Proteus mirabilis (strain HI4320).